Here is a 209-residue protein sequence, read N- to C-terminus: Uracil phosphoribosyltransferase (209 aa).

5-phospho-alpha-D-ribose 1-diphosphate-binding positions include arginine 79, arginine 104, and 131–139 (DPMLATGGS). Uracil is bound by residues isoleucine 194 and 199-201 (GDA). Position 200 (aspartate 200) interacts with 5-phospho-alpha-D-ribose 1-diphosphate.

The protein belongs to the UPRTase family. Mg(2+) serves as cofactor.

The catalysed reaction is UMP + diphosphate = 5-phospho-alpha-D-ribose 1-diphosphate + uracil. It functions in the pathway pyrimidine metabolism; UMP biosynthesis via salvage pathway; UMP from uracil: step 1/1. Allosterically activated by GTP. Catalyzes the conversion of uracil and 5-phospho-alpha-D-ribose 1-diphosphate (PRPP) to UMP and diphosphate. This is Uracil phosphoribosyltransferase from Clostridium novyi (strain NT).